Consider the following 104-residue polypeptide: BLOC-1-related complex subunit 7 (104 aa).

It belongs to the BORCS7 family.

It localises to the lysosome membrane. In terms of biological role, as part of a BORC-like complex may play a role in lysosomes movement and localization at the cell periphery. Associated with the cytosolic face of lysosomes, this complex may couple lysosomes to microtubule plus-end-directed kinesin motor. The protein is BLOC-1-related complex subunit 7 of Xenopus tropicalis (Western clawed frog).